A 249-amino-acid polypeptide reads, in one-letter code: Probable transcriptional regulatory protein OTT_1378 (249 aa).

Belongs to the TACO1 family.

Its subcellular location is the cytoplasm. The protein is Probable transcriptional regulatory protein OTT_1378 of Orientia tsutsugamushi (strain Ikeda) (Rickettsia tsutsugamushi).